We begin with the raw amino-acid sequence, 208 residues long: Major capsid protein (208 aa).

The span at M1–Q16 shows a compositional bias: low complexity. The tract at residues M1–S69 is disordered. Composition is skewed to basic residues over residues P17–N30 and P44–G61.

The protein belongs to the luteoviruses capsid protein family.

It is found in the virion. In terms of biological role, major capsid protein that self-assembles to form an icosahedral capsid with a T=3 symmetry, about 23 nm in diameter, and consisting of 180 capsid proteins monomers. Most of the 180 monomers are the major capsid protein, but a small percentage contain the minor capsid protein, which has a long C-terminal extension. The chain is Major capsid protein from Solanum tuberosum (Potato).